Here is a 175-residue protein sequence, read N- to C-terminus: Protein FAM89A (175 aa).

A disordered region spans residues Phe141–Ile175. Over residues Arg157 to Asp169 the composition is skewed to polar residues.

It belongs to the FAM89 family.

This is Protein FAM89A (Fam89a) from Mus musculus (Mouse).